The following is a 311-amino-acid chain: Probable lipid kinase YegS-like (311 aa).

The 132-residue stretch at 9 to 140 folds into the DAGKc domain; that stretch reads EHDGDTWLIL…VDVGTLGDDY (132 aa). ATP is bound by residues Thr-47, 73–79, and Ser-102; that span reads GDGTVNE. The Mg(2+) site is built by Lys-221, Asp-224, and Leu-226. Glu-281 serves as the catalytic Proton acceptor.

Belongs to the diacylglycerol/lipid kinase family. YegS lipid kinase subfamily. The cofactor is Mg(2+). Ca(2+) serves as cofactor.

It localises to the cytoplasm. Probably phosphorylates lipids; the in vivo substrate is unknown. In Chromohalobacter salexigens (strain ATCC BAA-138 / DSM 3043 / CIP 106854 / NCIMB 13768 / 1H11), this protein is Probable lipid kinase YegS-like.